The following is a 510-amino-acid chain: Xylose import ATP-binding protein XylG (510 aa).

ABC transporter domains follow at residues 5 to 242 and 259 to 505; these read LEMK…VGRE and LRVE…LRSE. 37–44 serves as a coordination point for ATP; that stretch reads GENGSGKS.

It belongs to the ABC transporter superfamily. Xylose importer (TC 3.A.1.2.4) family. The complex is composed of two ATP-binding proteins (XylG), two transmembrane proteins (XylH) and a solute-binding protein (XylF).

Its subcellular location is the cell inner membrane. The catalysed reaction is D-xylose(out) + ATP + H2O = D-xylose(in) + ADP + phosphate + H(+). Part of the ABC transporter complex XylFGH involved in xylose import. Responsible for energy coupling to the transport system. The protein is Xylose import ATP-binding protein XylG of Yersinia pestis.